Consider the following 419-residue polypeptide: L-rhamnose isomerase (419 aa).

Histidine 262, aspartate 294, and aspartate 296 together coordinate Mn(2+).

It belongs to the rhamnose isomerase family. As to quaternary structure, homotetramer. Requires Mn(2+) as cofactor.

It localises to the cytoplasm. The catalysed reaction is L-rhamnopyranose = L-rhamnulose. It participates in carbohydrate degradation; L-rhamnose degradation; glycerone phosphate from L-rhamnose: step 1/3. Functionally, catalyzes the interconversion of L-rhamnose and L-rhamnulose. This chain is L-rhamnose isomerase, found in Salmonella choleraesuis (strain SC-B67).